Consider the following 549-residue polypeptide: Glucose-6-phosphate isomerase (549 aa).

N6-acetyllysine occurs at positions 80, 228, and 234. The active-site Proton donor is Glu355. Active-site residues include His386 and Lys514.

The protein belongs to the GPI family.

Its subcellular location is the cytoplasm. The enzyme catalyses alpha-D-glucose 6-phosphate = beta-D-fructose 6-phosphate. The protein operates within carbohydrate biosynthesis; gluconeogenesis. It participates in carbohydrate degradation; glycolysis; D-glyceraldehyde 3-phosphate and glycerone phosphate from D-glucose: step 2/4. Its function is as follows. Catalyzes the reversible isomerization of glucose-6-phosphate to fructose-6-phosphate. This Escherichia coli (strain SE11) protein is Glucose-6-phosphate isomerase.